The chain runs to 59 residues: uncharacterized protein (59 aa).

It is found in the mitochondrion. This is an uncharacterized protein from Ascobolus immersus.